The chain runs to 463 residues: L-seryl-tRNA(Sec) selenium transferase (463 aa).

N6-(pyridoxal phosphate)lysine is present on K295.

The protein belongs to the SelA family. Homodecamer; pentamer of dimers. Binds only one seryl-tRNA(Sec) per dimer. Pyridoxal 5'-phosphate is required as a cofactor.

The protein resides in the cytoplasm. The catalysed reaction is L-seryl-tRNA(Sec) + selenophosphate + H(+) = L-selenocysteinyl-tRNA(Sec) + phosphate. The protein operates within aminoacyl-tRNA biosynthesis; selenocysteinyl-tRNA(Sec) biosynthesis; selenocysteinyl-tRNA(Sec) from L-seryl-tRNA(Sec) (bacterial route): step 1/1. Functionally, converts seryl-tRNA(Sec) to selenocysteinyl-tRNA(Sec) required for selenoprotein biosynthesis. The chain is L-seryl-tRNA(Sec) selenium transferase from Salmonella typhimurium (strain LT2 / SGSC1412 / ATCC 700720).